The primary structure comprises 196 residues: Protein GrpE (196 aa).

Residues 1–39 (MSSKEQKTPEGQAPEEIIMDQHEEIEAVEPEASAEQVDP) form a disordered region.

Belongs to the GrpE family. Homodimer.

It is found in the cytoplasm. Participates actively in the response to hyperosmotic and heat shock by preventing the aggregation of stress-denatured proteins, in association with DnaK and GrpE. It is the nucleotide exchange factor for DnaK and may function as a thermosensor. Unfolded proteins bind initially to DnaJ; upon interaction with the DnaJ-bound protein, DnaK hydrolyzes its bound ATP, resulting in the formation of a stable complex. GrpE releases ADP from DnaK; ATP binding to DnaK triggers the release of the substrate protein, thus completing the reaction cycle. Several rounds of ATP-dependent interactions between DnaJ, DnaK and GrpE are required for fully efficient folding. The sequence is that of Protein GrpE from Escherichia coli O139:H28 (strain E24377A / ETEC).